The primary structure comprises 238 residues: ATP synthase subunit O, mitochondrial (238 aa).

The N-terminal 36 residues, 1–36 (MANRFRSGISFFKTIAVTDSVSSVRSKSLFPALRTY), are a transit peptide targeting the mitochondrion. A Phosphothreonine modification is found at Thr90.

It belongs to the ATPase delta chain family. F-type ATPases have 2 components, CF(1) - the catalytic core - and CF(0) - the membrane proton channel. CF(1) has five subunits: alpha(3), beta(3), gamma(1), delta(1), epsilon(1). CF(0) has three main subunits: a, b and c.

It localises to the mitochondrion. It is found in the mitochondrion inner membrane. In terms of biological role, mitochondrial membrane ATP synthase (F(1)F(0) ATP synthase or Complex V) produces ATP from ADP in the presence of a proton gradient across the membrane which is generated by electron transport complexes of the respiratory chain. F-type ATPases consist of two structural domains, F(1) - containing the extramembraneous catalytic core and F(0) - containing the membrane proton channel, linked together by a central stalk and a peripheral stalk. During catalysis, ATP synthesis in the catalytic domain of F(1) is coupled via a rotary mechanism of the central stalk subunits to proton translocation. Part of the complex F(0) domain and the peripheric stalk, which acts as a stator to hold the catalytic alpha(3)beta(3) subcomplex and subunit a/ATP6 static relative to the rotary elements. This Arabidopsis thaliana (Mouse-ear cress) protein is ATP synthase subunit O, mitochondrial.